The following is a 193-amino-acid chain: Peptidyl-tRNA hydrolase (193 aa).

Y14 provides a ligand contact to tRNA. H19 serves as the catalytic Proton acceptor. Positions 64, 66, and 112 each coordinate tRNA.

Belongs to the PTH family. As to quaternary structure, monomer.

It is found in the cytoplasm. It catalyses the reaction an N-acyl-L-alpha-aminoacyl-tRNA + H2O = an N-acyl-L-amino acid + a tRNA + H(+). Hydrolyzes ribosome-free peptidyl-tRNAs (with 1 or more amino acids incorporated), which drop off the ribosome during protein synthesis, or as a result of ribosome stalling. Functionally, catalyzes the release of premature peptidyl moieties from peptidyl-tRNA molecules trapped in stalled 50S ribosomal subunits, and thus maintains levels of free tRNAs and 50S ribosomes. This Bartonella bacilliformis (strain ATCC 35685 / KC583 / Herrer 020/F12,63) protein is Peptidyl-tRNA hydrolase.